We begin with the raw amino-acid sequence, 331 residues long: MNFKKLPKIELHCHLDGSLRVDTILDIAKKDNIPLPSYNEKELINYVSIMDDCNSLDEYLNKFFIPNKVMQTKENLKRIAFELLEDVAADNVKYIEVRFAPLLHVEKGLNIEEIIESVLEGIKEAEKLYDIKGNLILGCMRNMDIPSAFEVVKKGAKFIGKGVVAIDLCGGEEPHFPGKYVEVLKLAKEYGYRITIHAGEAGVGENVLEAINLLNAERIGHGIYIKNCAEAYKLVKEKNIPLEVCPTSNLHTKAFESYETHPFMDFLKDDIKITINTDNMTVSNTTITKELEMLNKFCGLSIEDYKTIYLNSVEAAFTTKEAKKRLKKFVE.

Residues histidine 12 and histidine 14 each coordinate Zn(2+). Substrate contacts are provided by histidine 14, aspartate 16, and glycine 170. Histidine 197 provides a ligand contact to Zn(2+). Glutamate 200 acts as the Proton donor in catalysis. Position 278 (aspartate 278) interacts with Zn(2+).

It belongs to the metallo-dependent hydrolases superfamily. Adenosine and AMP deaminases family. Adenosine deaminase subfamily. Zn(2+) is required as a cofactor.

The enzyme catalyses adenosine + H2O + H(+) = inosine + NH4(+). The catalysed reaction is 2'-deoxyadenosine + H2O + H(+) = 2'-deoxyinosine + NH4(+). In terms of biological role, catalyzes the hydrolytic deamination of adenosine and 2-deoxyadenosine. The sequence is that of Adenosine deaminase from Clostridium botulinum (strain 657 / Type Ba4).